Here is a 320-residue protein sequence, read N- to C-terminus: Cytochrome f (320 aa).

The N-terminal stretch at 1–35 (MHTKNLFYSRPQQITQYLSAFLMMVILTRTSISSA) is a signal peptide. Heme is bound by residues Tyr36, Cys56, Cys59, and His60. Residues 286–306 (VQVLLFFFASIILAQIFLVLK) traverse the membrane as a helical segment.

This sequence belongs to the cytochrome f family. The 4 large subunits of the cytochrome b6-f complex are cytochrome b6, subunit IV (17 kDa polypeptide, petD), cytochrome f and the Rieske protein, while the 4 small subunits are PetG, PetL, PetM and PetN. The complex functions as a dimer. Requires heme as cofactor.

It is found in the plastid thylakoid membrane. In terms of biological role, component of the cytochrome b6-f complex, which mediates electron transfer between photosystem II (PSII) and photosystem I (PSI), cyclic electron flow around PSI, and state transitions. The sequence is that of Cytochrome f from Cuscuta obtusiflora (Peruvian dodder).